A 163-amino-acid chain; its full sequence is NADH-quinone oxidoreductase subunit I (163 aa).

4Fe-4S ferredoxin-type domains follow at residues 53–83 (LRRY…IEAG) and 94–123 (VRYD…EGPN). [4Fe-4S] cluster is bound by residues Cys63, Cys66, Cys69, Cys73, Cys103, Cys106, Cys109, and Cys113.

It belongs to the complex I 23 kDa subunit family. NDH-1 is composed of 14 different subunits. Subunits NuoA, H, J, K, L, M, N constitute the membrane sector of the complex. [4Fe-4S] cluster is required as a cofactor.

It localises to the cell inner membrane. The enzyme catalyses a quinone + NADH + 5 H(+)(in) = a quinol + NAD(+) + 4 H(+)(out). Functionally, NDH-1 shuttles electrons from NADH, via FMN and iron-sulfur (Fe-S) centers, to quinones in the respiratory chain. The immediate electron acceptor for the enzyme in this species is believed to be ubiquinone. Couples the redox reaction to proton translocation (for every two electrons transferred, four hydrogen ions are translocated across the cytoplasmic membrane), and thus conserves the redox energy in a proton gradient. In Bartonella tribocorum (strain CIP 105476 / IBS 506), this protein is NADH-quinone oxidoreductase subunit I.